Reading from the N-terminus, the 62-residue chain is uncharacterized protein (62 aa).

This is an uncharacterized protein from His1 virus (isolate Australia/Victoria) (His1V).